Reading from the N-terminus, the 525-residue chain is Vesicular inhibitory amino acid transporter (525 aa).

At 1–132 (MATLLRSKLT…WNVTNAIQGM (132 aa)) the chain is on the cytoplasmic side. A helical membrane pass occupies residues 133–153 (FVLGLPYAILHGGYLGLFLII). Residues 154–204 (FAAVVCCYTGKILIACLYEENEDGEVVRVRDSYVAIANACCAPRFPTLGGR) are Lumenal, vesicle-facing. Tyr-186 bears the 3'-nitrotyrosine mark. The helical transmembrane segment at 205 to 225 (VVNVAQIIELVMTCILYVVVS) threads the bilayer. Topologically, residues 226 to 265 (GNLMYNSFPGLPVSQKSWSIIATAVLLPCAFLKNLKAVSK) are cytoplasmic. The helical transmembrane segment at 266-286 (FSLLCTLAHFVINILVIAYCL) threads the bilayer. Topologically, residues 287 to 305 (SRARDWAWEKVKFYIDVKK) are lumenal, vesicle. A helical membrane pass occupies residues 306 to 326 (FPISIGIIVFSYTSQIFLPSL). Residues 327–341 (EGNMQQPSEFHCMMN) are Cytoplasmic-facing. The chain crosses the membrane as a helical span at residues 342–362 (WTHIAACVLKGLFALVAYLTW). The Lumenal, vesicle portion of the chain corresponds to 363–383 (ADETKEVITDNLPGSIRAVVN). The helical transmembrane segment at 384-404 (LFLVAKALLSYPLPFFAAVEV) threads the bilayer. Residues 405–438 (LEKSLFQEGSRAFFPACYGGDGRLKSWGLTLRCA) are Cytoplasmic-facing. Residues 439-459 (LVVFTLLMAIYVPHFALLMGL) traverse the membrane as a helical segment. At 460–461 (TG) the chain is on the lumenal, vesicle side. Residues 462–482 (SLTGAGLCFLLPSLFHLRLLW) traverse the membrane as a helical segment. Residues 483–489 (RKLLWHQ) are Cytoplasmic-facing. Residues 490–510 (VFFDVAIFVIGGICSVSGFVH) form a helical membrane-spanning segment. Topologically, residues 511–525 (SLEGLIEAYRTNAED) are lumenal, vesicle.

The protein belongs to the amino acid/polyamine transporter 2 family. Brain and retina. Localized in horizontal cell tips at both rod and cone terminals.

The protein localises to the cytoplasmic vesicle membrane. The protein resides in the presynapse. It carries out the reaction 4-aminobutanoate(out) + n H(+)(in) = 4-aminobutanoate(in) + n H(+)(out). The catalysed reaction is glycine(out) + n H(+)(in) = glycine(in) + n H(+)(out). The enzyme catalyses beta-alanine(out) + n H(+)(in) = beta-alanine(in) + n H(+)(out). With respect to regulation, chloride ions activate 4-aminobutanoate/H(+) transport. In terms of biological role, antiporter that exchanges vesicular protons for cytosolic 4-aminobutanoate or to a lesser extend glycine, thus allowing their secretion from nerve terminals. The transport is equally dependent on the chemical and electrical components of the proton gradient. May also transport beta-alanine. Acidification of GABAergic synaptic vesicles is a prerequisite for 4-aminobutanoate uptake. This chain is Vesicular inhibitory amino acid transporter, found in Mus musculus (Mouse).